A 180-amino-acid chain; its full sequence is Dual-action ribosomal maturation protein DarP (180 aa).

The protein belongs to the DarP family.

Its subcellular location is the cytoplasm. Member of a network of 50S ribosomal subunit biogenesis factors which assembles along the 30S-50S interface, preventing incorrect 23S rRNA structures from forming. Promotes peptidyl transferase center (PTC) maturation. This chain is Dual-action ribosomal maturation protein DarP, found in Pasteurella multocida (strain Pm70).